Here is a 414-residue protein sequence, read N- to C-terminus: Lysocardiolipin acyltransferase 1 (414 aa).

The next 2 membrane-spanning stretches (helical) occupy residues 47-67 (FILT…SPFL) and 86-106 (ATWL…KVII). An HXXXXD motif motif is present at residues 123–128 (HRTRMD). An N6-acetyllysine modification is found at Lys221. The next 2 membrane-spanning stretches (helical) occupy residues 340–360 (LRVL…SPAM) and 362–382 (LLIY…VIFV).

Belongs to the 1-acyl-sn-glycerol-3-phosphate acyltransferase family. In terms of tissue distribution, expressed at higher level in heart, kidney and pancreas than in brain, spleen, liver, lung, small intestine and placenta.

It is found in the endoplasmic reticulum membrane. The catalysed reaction is a 1-acyl-sn-glycero-3-phosphate + an acyl-CoA = a 1,2-diacyl-sn-glycero-3-phosphate + CoA. It catalyses the reaction a 1-acyl-sn-glycero-3-phospho-(1D-myo-inositol) + an acyl-CoA = a 1,2-diacyl-sn-glycero-3-phospho-(1D-myo-inositol) + CoA. The enzyme catalyses 1-acyl-sn-glycero-3-phospho-(1'-sn-glycerol) + an acyl-CoA = a 1,2-diacyl-sn-glycero-3-phospho-(1'-sn-glycerol) + CoA. It carries out the reaction 1-hexadecanoyl-sn-glycero-3-phosphate + (9Z)-octadecenoyl-CoA = 1-hexadecanoyl-2-(9Z-octadecenoyl)-sn-glycero-3-phosphate + CoA. The catalysed reaction is 1-(9Z-octadecenoyl)-sn-glycero-3-phosphate + (9Z)-octadecenoyl-CoA = 1,2-di-(9Z-octadecenoyl)-sn-glycero-3-phosphate + CoA. It catalyses the reaction 1-(9Z,12Z)-octadecadienoyl-sn-glycero-3-phosphate + (9Z)-octadecenoyl-CoA = 1-(9Z,12Z)-octadecadienoyl-2-(9Z)-octadecenoyl-sn-glycero-3-phosphate + CoA. The enzyme catalyses 1-(9Z,12Z,15Z)-octadecatrienoyl-sn-glycero-3-phosphate + (9Z)-octadecenoyl-CoA = 1-(9Z,12Z,15Z)-octadecatrienoyl-2-(9Z)-octadecenoyl-sn-glycero-3-phosphate + CoA. It carries out the reaction 1-(9Z-octadecenoyl)-sn-glycero-3-phosphate + hexadecanoyl-CoA = 1-(9Z)-octadecenoyl-2-hexadecanoyl-sn-glycero-3-phosphate + CoA. The catalysed reaction is 1-(9Z-octadecenoyl)-sn-glycero-3-phosphate + octadecanoyl-CoA = 1-(9Z-octadecenoyl)-2-octadecanoyl-sn-glycero-3-phosphate + CoA. It catalyses the reaction 1-acyl-sn-glycero-3-phospho-(1'-sn-glycerol) + (9Z)-octadecenoyl-CoA = 1-acyl-2-(9Z-octadecenoyl)-sn-glycero-3-phospho-(1'-sn-glycerol) + CoA. The enzyme catalyses a 1-acyl-sn-glycero-3-phospho-(1D-myo-inositol) + (9Z)-octadecenoyl-CoA = a 1-acyl-2-(9Z-octadecenoyl)-sn-glycero-3-phospho-(1D-myo-inositol) + CoA. It carries out the reaction 1-hexadecanoyl-sn-glycero-3-phospho-(1D-myo-inositol) + hexadecanoyl-CoA = 1,2-dihexadecanoyl-sn-glycero-3-phospho-(1D-myo-inositol) + CoA. The catalysed reaction is 1-hexadecanoyl-sn-glycero-3-phospho-(1D-myo-inositol) + octadecanoyl-CoA = 1-hexadecanoyl-2-octadecanoyl-sn-glycero-3-phospho-(1D-myo-inositol) + CoA. It catalyses the reaction 1-hexadecanoyl-sn-glycero-3-phospho-(1D-myo-inositol) + (9Z)-octadecenoyl-CoA = 1-hexadecanoyl-2-(9Z-octadecenoyl)-sn-glycero-3-phospho-(1D-myo-inositol) + CoA. The enzyme catalyses 1-hexadecanoyl-sn-glycero-3-phospho-(1D-myo-inositol) + (9Z,12Z)-octadecadienoyl-CoA = 1-hexadecanoyl-2-(9Z,12Z-octadecadienoyl)-sn-glycero-3-phospho-(1D-myo-inositol) + CoA. It carries out the reaction 1-hexadecanoyl-sn-glycero-3-phospho-(1D-myo-inositol) + (5Z,8Z,11Z,14Z)-eicosatetraenoyl-CoA = 1-hexadecanoyl-2-(5Z,8Z,11Z,14Z-eicosatetraenoyl)-sn-glycero-3-phospho-D-myo-inositol + CoA. The catalysed reaction is 1-hexadecanoyl-sn-glycero-3-phospho-(1'-sn-glycerol) + hexadecanoyl-CoA = 1,2-dihexadecanoyl-sn-glycero-3-phospho-(1'-sn-glycerol) + CoA. It catalyses the reaction 1-hexadecanoyl-sn-glycero-3-phospho-(1'-sn-glycerol) + octadecanoyl-CoA = 1-hexadecanoyl-2-octadecanoyl-sn-glycero-3-phospho-(1'-sn-glycerol) + CoA. The enzyme catalyses 1-hexadecanoyl-sn-glycero-3-phospho-(1'-sn-glycerol) + (9Z)-octadecenoyl-CoA = 1-hexadecanoyl-2-(9Z-octadecenoyl)-sn-glycero-3-phospho-(1'-sn-glycerol) + CoA. It carries out the reaction 1-hexadecanoyl-sn-glycero-3-phospho-(1'-sn-glycerol) + (9Z,12Z)-octadecadienoyl-CoA = 1-hexadecanoyl-2-(9Z,12Z-octadecadienoyl)-sn-glycero-3-phospho-(1'-sn-glycerol) + CoA. The catalysed reaction is 1-tetradecanoyl-sn-glycero-3-phospho-(1'-sn-glycerol) + (9Z)-octadecenoyl-CoA = 1-tetradecanoyl-2-(9Z-octadecenoyl)-sn-glycero-3-phospho-(1'-sn-glycerol) + CoA. It catalyses the reaction 1-octadecanoyl-sn-glycero-3-phospho-(1'-sn-glycerol) + (9Z)-octadecenoyl-CoA = 1-octadecanoyl-2-(9Z-octadecenoyl)-sn-glycero-3-phospho-(1'-sn-glycerol) + CoA. The enzyme catalyses 1-(9Z-octadecenoyl)-sn-glycero-3-phospho-(1'-sn-glycerol) + (9Z)-octadecenoyl-CoA = 1,2-di-(9Z-octadecenoyl)-sn-glycero-3-phospho-(1'-sn-glycerol) + CoA. It carries out the reaction 1-hexadecanoyl-sn-glycero-3-phospho-(1D-myo-inositol) + dodecanoyl-CoA = 1-hexadecanoyl-2-dodecanoyl-sn-glycero-3-phospho-(1D-myo-inositol) + CoA. The catalysed reaction is 1',3'-bis-[1-acyl-sn-glycero-3-phospho]-glycerol + (9Z)-octadecenoyl-CoA = 1'-[1-acyl-2-(9Z)-octadecenoyl-sn-glycero-3-phospho],3'-[1-acyl,2-hydroxy-sn-glycero-3-phospho]-glycerol + CoA. It catalyses the reaction 1'-[1,2-diacyl-sn-glycero-3-phospho],3'-[1-acyl-sn-glycero-3-phospho]-glycerol + (9Z)-octadecenoyl-CoA = 1'-[1,2-diacyl-sn-glycero-3-phospho],3'-[1-acyl,2-(9Z)-octadecenoyl-sn-glycero-3-phospho]-glycerol + CoA. The enzyme catalyses 1'-[1,2-diacyl-sn-glycero-3-phospho],3'-[1-acyl-sn-glycero-3-phospho]-glycerol + (9Z,12Z)-octadecadienoyl-CoA = 1'-[1,2-diacyl-sn-glycero-3-phospho],3'-[1-acyl,2-(9Z,12Z)-octadecadienoyl-sn-glycero-3-phospho]-glycerol + CoA. It carries out the reaction 1'-[1,2-diacyl-sn-glycero-3-phospho],3'-[1-acyl-sn-glycero-3-phospho]-glycerol + dodecanoyl-CoA = 1'-[1,2-diacyl-sn-glycero-3-phospho],3'-[1-acyl,2-dodecanoyl-sn-glycero-3-phospho]-glycerol + CoA. The catalysed reaction is 1',3'-bis-[1-acyl-sn-glycero-3-phospho]-glycerol + dodecanoyl-CoA = 1'-[1-acyl-2-dodecanoyl-sn-glycero-3-phospho],3'-[1-acyl,2-hydroxy-sn-glycero-3-phospho]-glycerol + CoA. It catalyses the reaction a 1-acyl-sn-glycero-3-phosphate + (9Z)-octadecenoyl-CoA = a 1-acyl-2-(9Z-octadecenoyl)-sn-glycero-3-phosphate + CoA. The enzyme catalyses 1',3'-bis-[1-acyl-sn-glycero-3-phospho]-glycerol + (9Z,12Z)-octadecadienoyl-CoA = 1'-[1-acyl-2-(9Z,12Z)-octadecadienoyl-sn-glycero-3-phospho],3'-[1-acyl,2-hydroxy-sn-glycero-3-phospho]-glycerol + CoA. It carries out the reaction 1',3'-bis-[1-acyl-sn-glycero-3-phospho]-glycerol + hexadecanoyl-CoA = 1'-[1-acyl-2-hexadecanoyl-sn-glycero-3-phospho],3'-[1-acyl,2-hydroxy-sn-glycero-3-phospho]-glycerol + CoA. The catalysed reaction is 1',3'-bis-[1-acyl-sn-glycero-3-phospho]-glycerol + octadecanoyl-CoA = 1'-[1-acyl-2-octadecanoyl-sn-glycero-3-phospho],3'-[1-acyl,2-hydroxy-sn-glycero-3-phospho]-glycerol + CoA. It catalyses the reaction 1'-[1,2-diacyl-sn-glycero-3-phospho],3'-[1-acyl-sn-glycero-3-phospho]-glycerol + octanoyl-CoA = 1'-[1,2-diacyl-sn-glycero-3-phospho],3'-[1-acyl,2-octanoyl-sn-glycero-3-phospho]-glycerol + CoA. The enzyme catalyses 1',3'-bis-[1-acyl-sn-glycero-3-phospho]-glycerol + octanoyl-CoA = 1'-[1-acyl-2-octanoyl-sn-glycero-3-phospho],3'-[1-acyl,2-hydroxy-sn-glycero-3-phospho]-glycerol + CoA. It carries out the reaction 1'-[1,2-diacyl-sn-glycero-3-phospho],3'-[1-acyl-sn-glycero-3-phospho]-glycerol + hexadecanoyl-CoA = 1'-[1,2-diacyl-sn-glycero-3-phospho],3'-[1-acyl,2-hexadecanoyl-sn-glycero-3-phospho]-glycerol + CoA. The catalysed reaction is 1'-[1,2-diacyl-sn-glycero-3-phospho],3'-[1-acyl-sn-glycero-3-phospho]-glycerol + (5Z,8Z,11Z,14Z)-eicosatetraenoyl-CoA = 1'-[1,2-diacyl-sn-glycero-3-phospho],3'-[1-acyl,2-(5Z,8Z,11Z,14Z)-eicosatetraenoyl-sn-glycero-3-phospho]-glycerol + CoA. It catalyses the reaction 1',3'-bis-[1-acyl-sn-glycero-3-phospho]-glycerol + (5Z,8Z,11Z,14Z)-eicosatetraenoyl-CoA = 1'-[1-acyl-2-(5Z,8Z,11Z,14Z)-eicosatetraenoyl-sn-glycero-3-phospho],3'-[1-acyl,2-hydroxy-sn-glycero-3-phospho]-glycerol + CoA. The enzyme catalyses a 1-acyl-sn-glycero-3-phospho-(1D-myo-inositol) + octadecanoyl-CoA = a 1-acyl-2-octadecanoyl-sn-glycero-3-phospho-(1D-myo-inositol) + CoA. It carries out the reaction a 2-acyl-sn-glycero-3-phospho-D-myo-inositol + octadecanoyl-CoA = 1-octadecanoyl-2-acyl-sn-glycero-3-phospho-1D-myo-inositol + CoA. It functions in the pathway phospholipid metabolism; CDP-diacylglycerol biosynthesis; CDP-diacylglycerol from sn-glycerol 3-phosphate: step 2/3. Exhibits acyl-CoA:lysocardiolipin acyltransferase (ALCAT) activity; catalyzes the reacylation of lyso-cardiolipin to cardiolipin (CL), a key step in CL remodeling. Recognizes both monolysocardiolipin and dilysocardiolipin as substrates with a preference for linoleoyl-CoA and oleoyl-CoA as acyl donors. Also exhibits 1-acyl-sn-glycerol-3-phosphate acyltransferase activity (AGPAT) activity; converts 1-acyl-sn-glycerol-3- phosphate (lysophosphatidic acid or LPA) into 1,2-diacyl-sn-glycerol-3- phosphate (phosphatidic acid or PA) by incorporating an acyl moiety at the sn-2 position of the glycerol backbone. Possesses both lysophosphatidylinositol acyltransferase (LPIAT) and lysophosphatidylglycerol acyltransferase (LPGAT) activities. Required for establishment of the hematopoietic and endothelial lineages. This chain is Lysocardiolipin acyltransferase 1 (LCLAT1), found in Homo sapiens (Human).